A 316-amino-acid polypeptide reads, in one-letter code: MASRDFLGRFGGEKGSSSDKAGGGAGEPDEVVELSLGLSLGGCFGANSGRDAKKPRLVRSSSLAAMYSLPGTSDDLAAATPPPAPLMRTSSLPTETEEERWRRREMQSLKRLQAKRKRLERRTSMNSGKSGGSSSRDDAQEPLYPSAFQLRRSVVDQGNTSSSMPEQGSADGAEAKSTSSMEISSDNNNNNNASNQNKSLPPPAPSPAGKLPNGIVKEQPPLRTLRSLTMRTTSTGDLRKSMMEDMPMVSSKVDGPNGKKIDGFLYKYRKGEEVRIVCVCHGNFLTPAEFVKHAGGGDVTNPLRHIVVNPAPSVFL.

Disordered stretches follow at residues Met1 to Asp29 and Thr72 to Gly236. Basic and acidic residues predominate over residues Glu99–Ser108. Residues Asp156–Glu166 are compositionally biased toward polar residues. Composition is skewed to low complexity over residues Ser179 to Ser199 and Leu222 to Thr235.

The protein belongs to the Ninja family.

Its subcellular location is the nucleus. The polypeptide is Ninja-family protein 2 (AFP-B1) (Triticum aestivum (Wheat)).